A 318-amino-acid polypeptide reads, in one-letter code: Mitochondrial thiamine pyrophosphate carrier (318 aa).

Solcar repeat units lie at residues 13-106, 116-202, and 214-309; these read NSKL…LTEL, HQFS…LKRA, and TGNL…FCNL. 5 helical membrane passes run 19-39, 87-107, 122-142, 173-193, and 220-240; these read AVAGSVSGFVTRALISPLDVI, ILSIGYGAVQFLAFEELTELL, FVCGGLSAGTATLTVHPVDVL, VFYKGLTPTVIAIFPYAGLQF, and LLCGCGSGVISKTFTYPLDLI. Positions 241-246 match the Substrate recognition motif; it reads KKRLQV. The chain crosses the membrane as a helical span at residues 293-313; it reads ALSTGFMFFWYELFCNLFHCI.

The protein belongs to the mitochondrial carrier (TC 2.A.29) family.

The protein resides in the mitochondrion membrane. The enzyme catalyses thiamine phosphate(out) + thiamine diphosphate(in) = thiamine phosphate(in) + thiamine diphosphate(out). Its function is as follows. Mitochondrial transporter mediating uptake of thiamine diphosphate into mitochondria. It is not clear if the antiporter activity is affected by the membrane potential or by the proton electrochemical gradient. This Mus musculus (Mouse) protein is Mitochondrial thiamine pyrophosphate carrier (Slc25a19).